The sequence spans 300 residues: Acetylglutamate kinase (300 aa).

Substrate-binding positions include 68–69, arginine 90, and asparagine 194; that span reads GG.

Belongs to the acetylglutamate kinase family. ArgB subfamily.

It is found in the cytoplasm. The catalysed reaction is N-acetyl-L-glutamate + ATP = N-acetyl-L-glutamyl 5-phosphate + ADP. Its pathway is amino-acid biosynthesis; L-arginine biosynthesis; N(2)-acetyl-L-ornithine from L-glutamate: step 2/4. In terms of biological role, catalyzes the ATP-dependent phosphorylation of N-acetyl-L-glutamate. The polypeptide is Acetylglutamate kinase (Methanocaldococcus jannaschii (strain ATCC 43067 / DSM 2661 / JAL-1 / JCM 10045 / NBRC 100440) (Methanococcus jannaschii)).